A 309-amino-acid polypeptide reads, in one-letter code: Glutaminase (309 aa).

The substrate site is built by serine 65, asparagine 117, glutamate 162, asparagine 169, tyrosine 193, tyrosine 245, and valine 263.

It belongs to the glutaminase family. As to quaternary structure, homotetramer.

It carries out the reaction L-glutamine + H2O = L-glutamate + NH4(+). The sequence is that of Glutaminase from Bacillus cereus (strain ATCC 10987 / NRS 248).